We begin with the raw amino-acid sequence, 396 residues long: uncharacterized protein (396 aa).

Helical transmembrane passes span 8–28 (TASG…ILAS), 44–64 (ISYV…ISGV), 73–93 (PLVV…PLSP), 97–117 (LAFV…AGTY), 133–153 (VLVK…ITFL), 158–178 (MFYG…IIYL), 213–233 (ALII…IWLP), 250–270 (LLSY…VLLN), 276–296 (VFIT…MLTV), 304–324 (ITAF…ITLM), 338–358 (IVAT…GLIA), and 363–383 (IAHI…AAAF).

Belongs to the major facilitator superfamily.

The protein resides in the cell membrane. This is an uncharacterized protein from Bacillus subtilis (strain 168).